The chain runs to 299 residues: Glutamyl-Q tRNA(Asp) synthetase (299 aa).

Residues 9–13 (RFAPS) and Glu45 each bind L-glutamate. Positions 12-22 (PSPTGPLHFGS) match the 'HIGH' region motif. Zn(2+)-binding residues include Cys101, Cys103, and Cys118. L-glutamate-binding residues include Tyr170 and Arg188. The 'KMSKS' region motif lies at 226–230 (KLSKS). ATP is bound at residue Lys229. The disordered stretch occupies residues 279-299 (QLLPRQRQRDRATCAYERQRD). The span at 285-299 (RQRDRATCAYERQRD) shows a compositional bias: basic and acidic residues.

This sequence belongs to the class-I aminoacyl-tRNA synthetase family. GluQ subfamily. Zn(2+) serves as cofactor.

Functionally, catalyzes the tRNA-independent activation of glutamate in presence of ATP and the subsequent transfer of glutamate onto a tRNA(Asp). Glutamate is transferred on the 2-amino-5-(4,5-dihydroxy-2-cyclopenten-1-yl) moiety of the queuosine in the wobble position of the QUC anticodon. The polypeptide is Glutamyl-Q tRNA(Asp) synthetase (Xanthomonas oryzae pv. oryzae (strain KACC10331 / KXO85)).